The primary structure comprises 219 residues: Biofilm-associated metzincin protease inhibitor (219 aa).

Residues Thr4–Leu24 form a helical membrane-spanning segment. Positions Asp191–Asp204 are enriched in basic and acidic residues. The segment at Asp191 to Gly219 is disordered. Pro residues predominate over residues Glu209–Gly219.

It localises to the cell membrane. Inhibitor of the metalloendopeptidase Mep72. Forms a protein-protein complex with the protease, which is the product of its coregulated adjacent gene, and probably prevents premature protease activity until the protein has been secreted. The sequence is that of Biofilm-associated metzincin protease inhibitor from Pseudomonas aeruginosa (strain ATCC 15692 / DSM 22644 / CIP 104116 / JCM 14847 / LMG 12228 / 1C / PRS 101 / PAO1).